Reading from the N-terminus, the 234-residue chain is 2,3-bisphosphoglycerate-dependent phosphoglycerate mutase (234 aa).

Substrate-binding positions include 8-15 (RHGESVWN), 21-22 (TG), R60, 87-90 (ERHY), K98, 114-115 (RR), and 183-184 (GN). H9 serves as the catalytic Tele-phosphohistidine intermediate. Catalysis depends on E87, which acts as the Proton donor/acceptor.

This sequence belongs to the phosphoglycerate mutase family. BPG-dependent PGAM subfamily. As to quaternary structure, homodimer.

It carries out the reaction (2R)-2-phosphoglycerate = (2R)-3-phosphoglycerate. Its pathway is carbohydrate degradation; glycolysis; pyruvate from D-glyceraldehyde 3-phosphate: step 3/5. In terms of biological role, catalyzes the interconversion of 2-phosphoglycerate and 3-phosphoglycerate. This Geobacter sp. (strain M21) protein is 2,3-bisphosphoglycerate-dependent phosphoglycerate mutase.